Reading from the N-terminus, the 425-residue chain is Riboflavin biosynthesis protein RibBA (425 aa).

The interval 1 to 204 (MTRLDSVERA…IADLIEWRRK (204 aa)) is DHBP synthase. D-ribulose 5-phosphate is bound by residues 28–29 (RE), Asp-33, 141–145 (RPGHT), and Glu-165. Residue Glu-29 coordinates Mg(2+). His-144 is a binding site for Mg(2+). Residues 205–425 (HEKHIERVAE…HLPGEFGGAL (221 aa)) form a GTP cyclohydrolase II region. GTP is bound at residue 259-263 (RVHSE). Residues Cys-264, Cys-275, and Cys-277 each contribute to the Zn(2+) site. Residues Gln-280, 303–305 (EGR), and Thr-325 contribute to the GTP site. The Proton acceptor; for GTP cyclohydrolase activity role is filled by Asp-337. Arg-339 functions as the Nucleophile; for GTP cyclohydrolase activity in the catalytic mechanism. GTP contacts are provided by Thr-360 and Lys-365.

In the N-terminal section; belongs to the DHBP synthase family. The protein in the C-terminal section; belongs to the GTP cyclohydrolase II family. Mg(2+) serves as cofactor. Requires Mn(2+) as cofactor. Zn(2+) is required as a cofactor.

It carries out the reaction D-ribulose 5-phosphate = (2S)-2-hydroxy-3-oxobutyl phosphate + formate + H(+). It catalyses the reaction GTP + 4 H2O = 2,5-diamino-6-hydroxy-4-(5-phosphoribosylamino)-pyrimidine + formate + 2 phosphate + 3 H(+). Its pathway is cofactor biosynthesis; riboflavin biosynthesis; 2-hydroxy-3-oxobutyl phosphate from D-ribulose 5-phosphate: step 1/1. It functions in the pathway cofactor biosynthesis; riboflavin biosynthesis; 5-amino-6-(D-ribitylamino)uracil from GTP: step 1/4. In terms of biological role, catalyzes the conversion of D-ribulose 5-phosphate to formate and 3,4-dihydroxy-2-butanone 4-phosphate. Catalyzes the conversion of GTP to 2,5-diamino-6-ribosylamino-4(3H)-pyrimidinone 5'-phosphate (DARP), formate and pyrophosphate. This chain is Riboflavin biosynthesis protein RibBA, found in Mycobacterium marinum (strain ATCC BAA-535 / M).